Consider the following 525-residue polypeptide: GMP synthase [glutamine-hydrolyzing] (525 aa).

Residues 8 to 207 (KILILDFGSQ…ALDICGCKAN (200 aa)) enclose the Glutamine amidotransferase type-1 domain. Cysteine 85 functions as the Nucleophile in the catalytic mechanism. Active-site residues include histidine 181 and glutamate 183. Positions 208–400 (WKPSSIIEDA…LGLPYNMLYR (193 aa)) constitute a GMPS ATP-PPase domain. 235–241 (SGGVDSS) contributes to the ATP binding site.

Homodimer.

It catalyses the reaction XMP + L-glutamine + ATP + H2O = GMP + L-glutamate + AMP + diphosphate + 2 H(+). It participates in purine metabolism; GMP biosynthesis; GMP from XMP (L-Gln route): step 1/1. Functionally, catalyzes the synthesis of GMP from XMP. In Shewanella frigidimarina (strain NCIMB 400), this protein is GMP synthase [glutamine-hydrolyzing].